Reading from the N-terminus, the 466-residue chain is Soluble pyridine nucleotide transhydrogenase (466 aa).

An FAD-binding site is contributed by 36-45 (ERYHNVGGGC).

The protein belongs to the class-I pyridine nucleotide-disulfide oxidoreductase family. It depends on FAD as a cofactor.

The protein resides in the cytoplasm. It catalyses the reaction NAD(+) + NADPH = NADH + NADP(+). In terms of biological role, conversion of NADPH, generated by peripheral catabolic pathways, to NADH, which can enter the respiratory chain for energy generation. The chain is Soluble pyridine nucleotide transhydrogenase from Salmonella paratyphi A (strain ATCC 9150 / SARB42).